The sequence spans 177 residues: Dual-action ribosomal maturation protein DarP (177 aa).

Basic and acidic residues predominate over residues 1–12 (MKIVGDSEHFKQ). Positions 1–26 (MKIVGDSEHFKQPYDSNDEYVSKTED) are disordered.

The protein belongs to the DarP family.

It localises to the cytoplasm. Its function is as follows. Member of a network of 50S ribosomal subunit biogenesis factors which assembles along the 30S-50S interface, preventing incorrect 23S rRNA structures from forming. Promotes peptidyl transferase center (PTC) maturation. In Shewanella oneidensis (strain ATCC 700550 / JCM 31522 / CIP 106686 / LMG 19005 / NCIMB 14063 / MR-1), this protein is Dual-action ribosomal maturation protein DarP.